The primary structure comprises 312 residues: Iron/alpha-ketoglutarate-dependent dioxygenase penM (312 aa).

Fe cation-binding residues include His-134, Asp-136, and His-211. A disordered region spans residues 287 to 312; sequence LGLKSEQPLPDGMEKGSMQETDIGGQ.

This sequence belongs to the PhyH family. In terms of assembly, homodimer. Fe cation is required as a cofactor.

It catalyses the reaction (-)-cyclopeptine + 2-oxoglutarate + O2 = (Z)-dehydrocyclopeptine + succinate + CO2 + H2O. It carries out the reaction (Z)-dehydrocyclopeptine + 2-oxoglutarate + O2 = (-)-cyclopenine + succinate + CO2. The catalysed reaction is (-)-4'-methoxycyclopeptine + 2-oxoglutarate + O2 = (Z)-4'-methoxydehydrocyclopeptine + succinate + CO2 + H2O. The enzyme catalyses (Z)-4'-methoxydehydrocyclopeptine + 2-oxoglutarate + O2 = (-)-4'-methoxycyclopenine + succinate + CO2. It participates in secondary metabolite biosynthesis. Its pathway is alkaloid biosynthesis. It functions in the pathway mycotoxin biosynthesis. Its function is as follows. Iron/alpha-ketoglutarate-dependent dioxygenase; part of the gene cluster that mediates the biosynthesis of penigequinolones, potent insecticidal alkaloids that contain a highly modified 10-carbon prenyl group. The first stage is catalyzed by the nonribosomal peptide synthetase penN that condenses anthranilic acid and O-methyl-L-tyrosine to produce 4'-methoxycyclopeptin. 4'-methoxycyclopeptin is then converted to 4'-methoxydehydrocyclopeptin by the ketoglutarate-dependent dioxygenase penM through dehydrogenation to form a double bond between C-alpha and C-beta of the O-methyltyrosine side chain. PenM also converts its first product methoxydehydrocyclopeptin to 4'-methoxycyclopenin. The following conversion of 4'methoxycyclopenin into 4'-methoxyviridicatin is catalyzed by the cyclopenase penL. 4'-methoxyviridicatin is the precursor of quinolone natural products, and is further converted to quinolinone B. The prenyltransferase penI then catalyzes the canonical Friedel-Crafts alkylation of quinolinone B with dimethylallyl cation to yield dimethylallyl quinolone, which is subjected to FAD-dependent dehydrogenation by the FAD-linked oxidoreductase penH to yield conjugated aryl diene. The delta(3') double bond then serves as the site of the second alkylation with DMAPP catalyzed by the prenyltransferase penG to yield a carbenium ion intermediate, which can be attacked by H(2)O to yield a styrenyl quinolone containing a C3'-hydroxyprenyl chain, or undergo cyclization to yield yaequinolones J1 and J2. The conversion of the styrenyl quinolone into the tetrahydrofuran-containing yaequinolone C is performed by the FAD-dependent monooxygenase penE and involves epoxidation of the terminal C7'-C8' olefin, followed by epoxide ring opening initiated by the C3' hydroxyl group. The predicted cysteine hydrolase penJ acts as an epoxide hydrolase that enhances the rate of the 5-exo-tet cyclization step, increasing the yield of yaequinolone C. PenF catalyzes the cationic rearrangement of the epoxide formed by penE (before ring opening to produce yaequinolone C) into yaequinolone D. Finally, the short-chain dehydrogenase/reductase (SDR)-like reductase penD, catalyzes both the dehydration of yaequinolone D and the reduction of the resulting oxonium to yield penigequinolone. The sequence is that of Iron/alpha-ketoglutarate-dependent dioxygenase penM from Penicillium thymicola.